The chain runs to 555 residues: Hydroxylamine reductase (555 aa).

The [4Fe-4S] cluster site is built by cysteine 3, cysteine 6, cysteine 18, and cysteine 25. Residues histidine 252, glutamate 276, cysteine 320, cysteine 407, cysteine 435, cysteine 460, glutamate 494, and lysine 496 each coordinate hybrid [4Fe-2O-2S] cluster. Cysteine 407 is subject to Cysteine persulfide.

This sequence belongs to the HCP family. [4Fe-4S] cluster is required as a cofactor. Requires hybrid [4Fe-2O-2S] cluster as cofactor.

It is found in the cytoplasm. It catalyses the reaction A + NH4(+) + H2O = hydroxylamine + AH2 + H(+). In terms of biological role, catalyzes the reduction of hydroxylamine to form NH(3) and H(2)O. This is Hydroxylamine reductase from Burkholderia lata (strain ATCC 17760 / DSM 23089 / LMG 22485 / NCIMB 9086 / R18194 / 383).